The primary structure comprises 253 residues: MAGGGSRMKKSCACCKRYLEHLGGKMSCFLIRMTTDSMHSMIIPDRFVNHFGGKIPGTIKLESPNGILYVVEVTECMNKTVLQCGWEAFVDAHHIKVGDSLLFRHIENSCFEVMILDSDGSENVSLKSNRNGVSDESQESEDSEGPAGPPYILSWKSKSRLSSLQKKIIKEKVRSIQSEVPIYVAIMNKSNIGLTSSPCQLELGARYAAAVHLPDRRQAVVLQRGAAMGHRDADQERQMHHQAVPDQWLEQDS.

Residues 26-119 (MSCFLIRMTT…CFEVMILDSD (94 aa)) constitute a DNA-binding region (TF-B3). Disordered regions lie at residues 126-150 (LKSN…AGPP) and 230-253 (HRDA…EQDS). A compositionally biased stretch (basic and acidic residues) spans 230-239 (HRDADQERQM).

The protein localises to the nucleus. This chain is Putative B3 domain-containing protein Os03g0619850, found in Oryza sativa subsp. japonica (Rice).